Reading from the N-terminus, the 236-residue chain is Small ribosomal subunit protein uS2c (236 aa).

Belongs to the universal ribosomal protein uS2 family.

Its subcellular location is the plastid. It localises to the chloroplast. The protein is Small ribosomal subunit protein uS2c (rps2) of Lemna minor (Common duckweed).